The following is a 385-amino-acid chain: DNA double-strand break repair protein Mre11 (385 aa).

The Mn(2+) site is built by aspartate 14, histidine 16, and aspartate 58. Histidine 94 functions as the Proton donor in the catalytic mechanism. Positions 180, 216, and 218 each coordinate Mn(2+).

It belongs to the MRE11/RAD32 family. As to quaternary structure, homodimer. Forms a heterotetramer composed of two Mre11 subunits and two Rad50 subunits. Homodimerization facilitates DNA binding. The cofactor is Mn(2+).

With respect to regulation, nuclease activity is regulated by Rad50. The mirin-derivative PFM39, specifically inhibits the 3'-5' exonuclease activity. The N-alkylated mirin-derivatives PFM03 and PFM01 specifically inhibit the endonuclease activity. In terms of biological role, part of the Rad50/Mre11 complex, which is involved in the early steps of DNA double-strand break (DSB) repair. The complex may facilitate opening of the processed DNA ends to aid in the recruitment of HerA and NurA. Mre11 binds to DSB ends and has both double-stranded 3'-5' exonuclease activity and single-stranded endonuclease activity. In Thermotoga maritima (strain ATCC 43589 / DSM 3109 / JCM 10099 / NBRC 100826 / MSB8), this protein is DNA double-strand break repair protein Mre11.